Here is a 554-residue protein sequence, read N- to C-terminus: Phenylalanine--tRNA ligase beta subunit (554 aa).

The region spanning 276–351 (LTLKSRIISI…INYGYEKFEG (76 aa)) is the B5 domain. Mg(2+) is bound by residues D329, D335, E338, and E339.

The protein belongs to the phenylalanyl-tRNA synthetase beta subunit family. Type 2 subfamily. In terms of assembly, tetramer of two alpha and two beta subunits. Mg(2+) serves as cofactor.

The protein localises to the cytoplasm. The catalysed reaction is tRNA(Phe) + L-phenylalanine + ATP = L-phenylalanyl-tRNA(Phe) + AMP + diphosphate + H(+). This chain is Phenylalanine--tRNA ligase beta subunit, found in Methanococcus maripaludis (strain C7 / ATCC BAA-1331).